We begin with the raw amino-acid sequence, 209 residues long: Chaperone protein TorD (209 aa).

Belongs to the TorD/DmsD family. TorD subfamily.

Its subcellular location is the cytoplasm. Functionally, involved in the biogenesis of TorA. Acts on TorA before the insertion of the molybdenum cofactor and, as a result, probably favors a conformation of the apoenzyme that is competent for acquiring the cofactor. This chain is Chaperone protein TorD, found in Shewanella massilia.